The chain runs to 246 residues: Processing and transport protein (246 aa).

Belongs to the herpesviridae PRTP family.

In terms of biological role, this protein may affect translocation of the virus glycoproteins to membranes. It is involved in capsid maturation. This Homo sapiens (Human) protein is Processing and transport protein (UL28).